A 645-amino-acid polypeptide reads, in one-letter code: Developmental regulatory protein wetA (645 aa).

5 disordered regions span residues 158–187 (SLHSPQRPQNTTSSDTPSPKPPNTDARKPK), 201–249 (TNLR…VSPP), 284–376 (YYGQ…QMHW), 461–578 (AQTF…DGAS), and 596–618 (GVAPSGSSKTKARREKEAQDRRR). Over residues 240–249 (TQGNLPVSPP) the composition is skewed to polar residues. Composition is skewed to basic residues over residues 315-326 (QHHHHPHHHHQQ) and 351-361 (QHQHQHHHQQQ). Low complexity predominate over residues 362–373 (QHHQQQQQQQHQ). Positions 509–518 (GPSSSPTPAD) are enriched in polar residues. Over residues 528–546 (SSGASVSSLRSSSGRLPAS) the composition is skewed to low complexity. Over residues 562 to 572 (ISGSNSATSLG) the composition is skewed to polar residues.

This sequence belongs to the wetA family.

Functionally, brlA, abaA and wetA are pivotal regulators of conidiophore development and conidium maturation. They act individually and together to regulate their own expression and that of numerous other sporulation-specific genes. BrlA, abaA and wetA act together to positively regulate the expression of the Pks1 gene cluster that mediates the biosynthesis of an anthraquinone derivative pigment that contributes to conidial pigmentation that provides protection from UV radiation, heat and cold stress. In Metarhizium robertsii (strain ARSEF 23 / ATCC MYA-3075) (Metarhizium anisopliae (strain ARSEF 23)), this protein is Developmental regulatory protein wetA.